Reading from the N-terminus, the 455-residue chain is Nuclear receptor subfamily 6 group A member 1-B (455 aa).

The nuclear receptor DNA-binding region spans 38-113 (ERWCLICGDR…MGMNRKAIRE (76 aa)). NR C4-type zinc fingers lie at residues 41–61 (CLIC…CEGC) and 77–96 (CNRD…CQYC). The interval 145 to 173 (EGSDLSDSWSHGYSNHSSPGNSLSEGGQS) is disordered. The span at 149–165 (LSDSWSHGYSNHSSPGN) shows a compositional bias: polar residues. Residues 215–446 (QTHTLTGQIL…YSCTTNQNPW (232 aa)) enclose the NR LBD domain.

This sequence belongs to the nuclear hormone receptor family. NR6 subfamily. As to quaternary structure, homodimer.

The protein resides in the nucleus. Functionally, probable orphan nuclear receptor. Binds to a response element containing repeats of the motif 5'-AGGTCA-3'. This is Nuclear receptor subfamily 6 group A member 1-B from Danio rerio (Zebrafish).